We begin with the raw amino-acid sequence, 225 residues long: Ribosomal RNA small subunit methyltransferase G (225 aa).

Residues glycine 96, phenylalanine 101, 146–147, and arginine 160 contribute to the S-adenosyl-L-methionine site; that span reads AE.

The protein belongs to the methyltransferase superfamily. RNA methyltransferase RsmG family.

Its subcellular location is the cytoplasm. Functionally, specifically methylates the N7 position of a guanine in 16S rRNA. The sequence is that of Ribosomal RNA small subunit methyltransferase G from Mycoplasma mobile (strain ATCC 43663 / 163K / NCTC 11711) (Mesomycoplasma mobile).